The following is a 394-amino-acid chain: MAAETFLFTSESVNEGHPDKLCDQVSDAVLDACLAQDADSKVACETVTKTNMVMVLGEITTKATVDYEKIVRDTCRNIGFISDDVGLDADRCKVLVNIEQQSPDIAQGVHGHFTKRPEEVGAGDQGIMFGYATDETPELMPLSHVLATKLGARLTEVRKNGTCAWVRPDGKTQVTVEYLNEDGAMVPVRVHTVLISTQHDETVTNDEIAADLKEHVIKPVIPAKYLDENTIFHLNPSGRFVIGGPHGDAGLTGRKIIIDTYGGWGAHGGGAFSGKDPTKVDRSGAYIARQAAKSIIASGLARRCIVQISYAIGVPEPLSVFVDSYGTGKIPDREILKLVKENFDFRPGMISINLDLKKGGNRFIKTAAYGHFGRDDADFTWEVVKPLKFDKASA.

Glutamate 11 provides a ligand contact to Mg(2+). Histidine 17 contributes to the ATP binding site. Glutamate 45 provides a ligand contact to K(+). The L-methionine site is built by glutamate 58 and glutamine 101. ATP contacts are provided by residues aspartate 169–lysine 171, serine 237–phenylalanine 240, aspartate 248, arginine 254–lysine 255, alanine 271, lysine 275, and lysine 279. Aspartate 248 is a binding site for L-methionine. Lysine 279 is a binding site for L-methionine.

This sequence belongs to the AdoMet synthase family. Homotetramer. The cofactor is Mn(2+). It depends on Mg(2+) as a cofactor. Co(2+) is required as a cofactor. K(+) serves as cofactor.

The protein localises to the cytoplasm. It carries out the reaction L-methionine + ATP + H2O = S-adenosyl-L-methionine + phosphate + diphosphate. The protein operates within amino-acid biosynthesis; S-adenosyl-L-methionine biosynthesis; S-adenosyl-L-methionine from L-methionine: step 1/1. Functionally, catalyzes the formation of S-adenosylmethionine from methionine and ATP. The reaction comprises two steps that are both catalyzed by the same enzyme: formation of S-adenosylmethionine (AdoMet) and triphosphate, and subsequent hydrolysis of the triphosphate. The chain is S-adenosylmethionine synthase 3 (SAM3) from Hordeum vulgare (Barley).